The primary structure comprises 295 residues: ATP synthase gamma chain (295 aa).

Belongs to the ATPase gamma chain family. F-type ATPases have 2 components, CF(1) - the catalytic core - and CF(0) - the membrane proton channel. CF(1) has five subunits: alpha(3), beta(3), gamma(1), delta(1), epsilon(1). CF(0) has three main subunits: a, b and c.

Its subcellular location is the cell inner membrane. Functionally, produces ATP from ADP in the presence of a proton gradient across the membrane. The gamma chain is believed to be important in regulating ATPase activity and the flow of protons through the CF(0) complex. The polypeptide is ATP synthase gamma chain (Bdellovibrio bacteriovorus (strain ATCC 15356 / DSM 50701 / NCIMB 9529 / HD100)).